Reading from the N-terminus, the 573-residue chain is Urease subunit alpha 2 (573 aa).

A Urease domain is found at 135-573 (GGMDTHVHYI…ISLNQLYFFS (439 aa)). Ni(2+) contacts are provided by His140, His142, and Lys223. N6-carboxylysine is present on Lys223. His225 contacts substrate. Ni(2+) contacts are provided by His252 and His278. His326 functions as the Proton donor in the catalytic mechanism. A Ni(2+)-binding site is contributed by Asp366.

It belongs to the metallo-dependent hydrolases superfamily. Urease alpha subunit family. As to quaternary structure, heterotrimer of UreA (gamma), UreB (beta) and UreC (alpha) subunits. Three heterotrimers associate to form the active enzyme. Requires Ni cation as cofactor. In terms of processing, carboxylation allows a single lysine to coordinate two nickel ions.

Its subcellular location is the cytoplasm. It catalyses the reaction urea + 2 H2O + H(+) = hydrogencarbonate + 2 NH4(+). The protein operates within nitrogen metabolism; urea degradation; CO(2) and NH(3) from urea (urease route): step 1/1. The polypeptide is Urease subunit alpha 2 (Brucella melitensis biotype 1 (strain ATCC 23456 / CCUG 17765 / NCTC 10094 / 16M)).